We begin with the raw amino-acid sequence, 361 residues long: Chorismate synthase (361 aa).

2 residues coordinate NADP(+): Arg48 and Arg54. FMN is bound by residues 125-127 (RSS), 238-239 (NA), Gly278, 293-297 (KPTSS), and Arg319.

The protein belongs to the chorismate synthase family. In terms of assembly, homotetramer. The cofactor is FMNH2.

The enzyme catalyses 5-O-(1-carboxyvinyl)-3-phosphoshikimate = chorismate + phosphate. Its pathway is metabolic intermediate biosynthesis; chorismate biosynthesis; chorismate from D-erythrose 4-phosphate and phosphoenolpyruvate: step 7/7. In terms of biological role, catalyzes the anti-1,4-elimination of the C-3 phosphate and the C-6 proR hydrogen from 5-enolpyruvylshikimate-3-phosphate (EPSP) to yield chorismate, which is the branch point compound that serves as the starting substrate for the three terminal pathways of aromatic amino acid biosynthesis. This reaction introduces a second double bond into the aromatic ring system. The sequence is that of Chorismate synthase from Salmonella typhi.